Consider the following 199-residue polypeptide: GTP cyclohydrolase-2 (199 aa).

49 to 53 (RIHSE) contacts GTP. Residues cysteine 54, cysteine 65, and cysteine 67 each coordinate Zn(2+). GTP is bound by residues glutamine 70, 92 to 94 (EGR), and threonine 114. Residue aspartate 126 is the Proton acceptor of the active site. Arginine 128 serves as the catalytic Nucleophile. The GTP site is built by threonine 149 and lysine 154.

It belongs to the GTP cyclohydrolase II family. In terms of assembly, homodimer. It depends on Zn(2+) as a cofactor.

The catalysed reaction is GTP + 4 H2O = 2,5-diamino-6-hydroxy-4-(5-phosphoribosylamino)-pyrimidine + formate + 2 phosphate + 3 H(+). It functions in the pathway cofactor biosynthesis; riboflavin biosynthesis; 5-amino-6-(D-ribitylamino)uracil from GTP: step 1/4. Its function is as follows. Catalyzes the conversion of GTP to 2,5-diamino-6-ribosylamino-4(3H)-pyrimidinone 5'-phosphate (DARP), formate and pyrophosphate. This is GTP cyclohydrolase-2 from Blochmanniella pennsylvanica (strain BPEN).